A 205-amino-acid chain; its full sequence is GTP cyclohydrolase-2 (205 aa).

A GTP-binding site is contributed by 49–53; the sequence is RLHSE. Zn(2+) is bound by residues C54, C65, and C67. GTP-binding positions include Q70, 92-94, and T114; that span reads EGR. D126 (proton acceptor) is an active-site residue. The Nucleophile role is filled by R128. 2 residues coordinate GTP: T149 and K154.

The protein belongs to the GTP cyclohydrolase II family. It depends on Zn(2+) as a cofactor.

The enzyme catalyses GTP + 4 H2O = 2,5-diamino-6-hydroxy-4-(5-phosphoribosylamino)-pyrimidine + formate + 2 phosphate + 3 H(+). It functions in the pathway cofactor biosynthesis; riboflavin biosynthesis; 5-amino-6-(D-ribitylamino)uracil from GTP: step 1/4. Catalyzes the conversion of GTP to 2,5-diamino-6-ribosylamino-4(3H)-pyrimidinone 5'-phosphate (DARP), formate and pyrophosphate. This chain is GTP cyclohydrolase-2, found in Pseudomonas putida (strain GB-1).